Consider the following 341-residue polypeptide: Geranylgeranyl transferase type-2 subunit beta (341 aa).

PFTB repeat units lie at residues 15–55, 62–104, 122–163, 170–211, 223–264, and 271–313; these read KSKH…ITMN, QQDV…KIYD, RERL…SLLN, ADTA…AIMN, VKLI…SILK, and LKIL…SLID. Geranylgeranyl diphosphate contacts are provided by residues 196–198 and 243–255; these read HAA and RPEK…YSWW. Zn(2+) is bound by residues D249, C251, and H301.

The protein belongs to the protein prenyltransferase subunit beta family. As to quaternary structure, heterodimer of an alpha and a beta subunit. Requires Zn(2+) as cofactor.

The enzyme catalyses geranylgeranyl diphosphate + L-cysteinyl-[protein] = S-geranylgeranyl-L-cysteinyl-[protein] + diphosphate. In terms of biological role, catalyzes the transfer of a geranyl-geranyl moiety from geranyl-geranyl pyrophosphate to proteins having the C-terminal -XCC or -XCXC, where both cysteines may become modified. Acts on YPT1 and SEC4. This Candida albicans (Yeast) protein is Geranylgeranyl transferase type-2 subunit beta (BET2).